Reading from the N-terminus, the 313-residue chain is MIFSTLEHILTHISFSIVSIVITIHLITFLVDEIVKLYDSSEKGIIVTFFCITGLLVTRWISSGHFPLSDLYESLIFLSWSFSLIHIIPYFKKNVLILSKITGPSAILTQGFATSGILTEIHQSGILVPALQSEWLIMHVSMMILGYAALLCGSLLSVALLVITFRKNRKLFYKSNGFLNESFFLGENVVENTSFFCAKNYYRSQLIQQLDYWSYRVISLGFTFLTIGILSGAVWANEAWGSYWNWDPKETWAFITWIVFAIYLHTRTNRNLRGPNSAIVASIGFLIIWICYFGVNLLGIGLHSYGSFPSTFN.

8 consecutive transmembrane segments (helical) span residues 9 to 29 (ILTHISFSIVSIVITIHLITF), 44 to 64 (GIIVTFFCITGLLVTRWISSG), 71 to 91 (LYESLIFLSWSFSLIHIIPYF), 111 to 131 (GFATSGILTEIHQSGILVPAL), 143 to 163 (MILGYAALLCGSLLSVALLVI), 217 to 237 (VISLGFTFLTIGILSGAVWAN), 244 to 264 (WNWDPKETWAFITWIVFAIYL), and 278 to 298 (AIVASIGFLIIWICYFGVNLL).

Belongs to the CcmF/CycK/Ccl1/NrfE/CcsA family. As to quaternary structure, may interact with Ccs1.

The protein resides in the plastid. The protein localises to the chloroplast thylakoid membrane. Its function is as follows. Required during biogenesis of c-type cytochromes (cytochrome c6 and cytochrome f) at the step of heme attachment. The sequence is that of Cytochrome c biogenesis protein CcsA from Solanum bulbocastanum (Wild potato).